A 504-amino-acid chain; its full sequence is Maturase K (504 aa).

This sequence belongs to the intron maturase 2 family. MatK subfamily.

Its subcellular location is the plastid. The protein resides in the chloroplast. Functionally, usually encoded in the trnK tRNA gene intron. Probably assists in splicing its own and other chloroplast group II introns. The chain is Maturase K from Quercus gemelliflora (Pasang hiris).